The primary structure comprises 371 residues: Polygalacturonase (371 aa).

Residues 1–19 (MPSYLRNLVWATLAAGLVS) form the signal peptide. Residues 20 to 34 (AAPTPSRVSDLTKKS) constitute a propeptide that is removed on maturation. An intrachain disulfide couples C38 to C53. PbH1 repeat units lie at residues 95–117 (GPLIKISGSDITVEAADGAVINA), 165–195 (SDNLIIDGVTIDNSDGDENGGHNTDGFDISE), 196–217 (STGVTIRNAVVKNQDDCIAINS), 218–238 (GQNIYFTGGTCSGGHGLSIGS), 247–268 (VKNVTITDSTVTDSANGVRIKT), 276–298 (VSDVTFSDITVSGITDYGIVIEQ), and 310–355 (TSGV…DITS). The active-site Proton donor is D210. Residues C212 and C228 are joined by a disulfide bond. The active site involves H232. N-linked (GlcNAc...) asparagine glycosylation is present at N249. 2 cysteine pairs are disulfide-bonded: C338–C343 and C362–C371.

The protein belongs to the glycosyl hydrolase 28 family.

The protein resides in the secreted. It catalyses the reaction (1,4-alpha-D-galacturonosyl)n+m + H2O = (1,4-alpha-D-galacturonosyl)n + (1,4-alpha-D-galacturonosyl)m.. This chain is Polygalacturonase, found in Penicillium janthinellum (Penicillium vitale).